A 460-amino-acid chain; its full sequence is Acetyl-CoA decarbonylase/synthase complex subunit beta (460 aa).

The [Ni-Fe-S] cluster site is built by Cys-188, Cys-191, Cys-277, and Cys-279. Residues 402–416 (EETEPEEEEVEEAYP) are compositionally biased toward acidic residues. The tract at residues 402 to 422 (EETEPEEEEVEEAYPEETPIP) is disordered.

It belongs to the CdhC family. Monomer. The ACDS complex is made up of alpha, epsilon, beta, gamma and delta chains with a probable stoichiometry of (alpha(2)epsilon(2))(4)-beta(8)-(gamma(1)delta(1))(8). [Ni-Fe-S] cluster serves as cofactor.

It catalyses the reaction Co(I)-[corrinoid Fe-S protein] + acetyl-CoA + H(+) = methyl-Co(III)-[corrinoid Fe-S protein] + CO + CoA. Part of a complex that catalyzes the reversible cleavage of acetyl-CoA, allowing autotrophic growth from CO(2). The alpha-epsilon complex generates CO from CO(2), while the beta subunit (this protein) combines the CO with CoA and a methyl group to form acetyl-CoA. The methyl group, which is incorporated into acetyl-CoA, is transferred to the beta subunit by a corrinoid iron-sulfur protein (the gamma-delta complex). The protein is Acetyl-CoA decarbonylase/synthase complex subunit beta of Methanothermobacter thermautotrophicus (strain ATCC 29096 / DSM 1053 / JCM 10044 / NBRC 100330 / Delta H) (Methanobacterium thermoautotrophicum).